A 171-amino-acid polypeptide reads, in one-letter code: S-ribosylhomocysteine lyase (171 aa).

Fe cation contacts are provided by histidine 54, histidine 58, and cysteine 128.

Belongs to the LuxS family. Homodimer. Fe cation is required as a cofactor.

It catalyses the reaction S-(5-deoxy-D-ribos-5-yl)-L-homocysteine = (S)-4,5-dihydroxypentane-2,3-dione + L-homocysteine. Its function is as follows. Involved in the synthesis of autoinducer 2 (AI-2) which is secreted by bacteria and is used to communicate both the cell density and the metabolic potential of the environment. The regulation of gene expression in response to changes in cell density is called quorum sensing. Catalyzes the transformation of S-ribosylhomocysteine (RHC) to homocysteine (HC) and 4,5-dihydroxy-2,3-pentadione (DPD). The chain is S-ribosylhomocysteine lyase from Cronobacter sakazakii (strain ATCC BAA-894) (Enterobacter sakazakii).